Consider the following 120-residue polypeptide: Large ribosomal subunit protein uL14 (120 aa).

This sequence belongs to the universal ribosomal protein uL14 family. As to quaternary structure, part of the 50S ribosomal subunit. Forms a cluster with proteins L3 and L19. In the 70S ribosome, L14 and L19 interact and together make contacts with the 16S rRNA in bridges B5 and B8.

In terms of biological role, binds to 23S rRNA. Forms part of two intersubunit bridges in the 70S ribosome. The sequence is that of Large ribosomal subunit protein uL14 from Aster yellows witches'-broom phytoplasma (strain AYWB).